The sequence spans 601 residues: Transcription factor ATEG_07666 (601 aa).

A DNA-binding region (zn(2)-C6 fungal-type) is located at residues 17–44 (CEECRRRKARCDRVRPKCGFCTENGMQC).

It localises to the nucleus. In terms of biological role, specific transcriptional regulator for the azasperpyranone A biosynthesis cluster B. The polypeptide is Transcription factor ATEG_07666 (Aspergillus terreus (strain NIH 2624 / FGSC A1156)).